The following is a 328-amino-acid chain: Sterol-4-alpha-carboxylate 3-dehydrogenase, decarboxylating (328 aa).

Tyr-145 functions as the Proton acceptor in the catalytic mechanism. Lys-149 is a binding site for NAD(+). The chain crosses the membrane as a helical span at residues Leu-259 to Trp-279.

The protein belongs to the 3-beta-HSD family. In terms of assembly, homodimer.

It is found in the endoplasmic reticulum membrane. The protein resides in the lipid droplet. It carries out the reaction a 3beta-hydroxysteroid-4alpha-carboxylate + NADP(+) = a 3-oxosteroid + CO2 + NADPH. It catalyses the reaction a 3beta-hydroxysteroid-4alpha-carboxylate + NAD(+) = a 3-oxosteroid + CO2 + NADH. It functions in the pathway steroid biosynthesis; zymosterol biosynthesis; zymosterol from lanosterol: step 4/6. Its function is as follows. Catalyzes the NAD(P)(+)-dependent oxidative decarboxylation of the C4 methyl groups of 4-alpha-carboxysterols in post-squalene cholesterol biosynthesis. The protein is Sterol-4-alpha-carboxylate 3-dehydrogenase, decarboxylating (nsdhl) of Dictyostelium discoideum (Social amoeba).